The following is a 138-amino-acid chain: UPF0201 protein TK1335 (138 aa).

It belongs to the UPF0201 family.

The protein is UPF0201 protein TK1335 of Thermococcus kodakarensis (strain ATCC BAA-918 / JCM 12380 / KOD1) (Pyrococcus kodakaraensis (strain KOD1)).